Here is a 466-residue protein sequence, read N- to C-terminus: Soluble pyridine nucleotide transhydrogenase (466 aa).

Position 36–45 (36–45 (ERYQNVGGGC)) interacts with FAD.

It belongs to the class-I pyridine nucleotide-disulfide oxidoreductase family. FAD is required as a cofactor.

It localises to the cytoplasm. It catalyses the reaction NAD(+) + NADPH = NADH + NADP(+). Its function is as follows. Conversion of NADPH, generated by peripheral catabolic pathways, to NADH, which can enter the respiratory chain for energy generation. The protein is Soluble pyridine nucleotide transhydrogenase of Escherichia fergusonii (strain ATCC 35469 / DSM 13698 / CCUG 18766 / IAM 14443 / JCM 21226 / LMG 7866 / NBRC 102419 / NCTC 12128 / CDC 0568-73).